We begin with the raw amino-acid sequence, 307 residues long: F-box protein PP2-B7 (307 aa).

The F-box domain occupies 37–83 (PLSLGDLPEECISLIISFTSPRDACVFALVSKTFESAVQSDIVWEKF).

The chain is F-box protein PP2-B7 (PP2B7) from Arabidopsis thaliana (Mouse-ear cress).